The primary structure comprises 758 residues: 52 kDa repressor of the inhibitor of the protein kinase (758 aa).

Residues Met-1–Phe-86 form a THAP-type zinc finger. A disordered region spans residues Gln-116–Val-141. Ser-563 is subject to Phosphoserine.

In terms of assembly, interacts with DNAJC3, probably sequestring it.

In terms of biological role, upstream regulator of interferon-induced serine/threonine protein kinase R (PKR). May block the PKR-inhibitory function of DNAJC3, resulting in restoration of kinase activity and suppression of cell growth. This Mus musculus (Mouse) protein is 52 kDa repressor of the inhibitor of the protein kinase.